The chain runs to 647 residues: Probable squalene--hopene cyclase (647 aa).

One copy of the PFTB 1 repeat lies at 67–108 (EAKIGNYLRRTQGAHGGWPLVHDGPFDMSASVKSYFALKMIG). The active-site Proton donor is the D388. PFTB repeat units follow at residues 413–454 (IARG…GALL) and 530–577 (IRKA…ALLG).

The protein belongs to the terpene cyclase/mutase family.

It carries out the reaction squalene = hop-22(29)-ene. It catalyses the reaction squalene + H2O = hopan-22-ol. It functions in the pathway secondary metabolite biosynthesis; hopanoid biosynthesis. In terms of biological role, catalyzes the cyclization of squalene into hopene. Probably part of an operon y4aABCD involved in the synthesis of an isoprenoid compound. In Sinorhizobium fredii (strain NBRC 101917 / NGR234), this protein is Probable squalene--hopene cyclase (shc).